Reading from the N-terminus, the 1378-residue chain is Bud site selection protein 4 (1378 aa).

Disordered stretches follow at residues 71–95 (NNVI…NNDK), 361–441 (KDSP…NSES), and 458–480 (TNKS…LKSS). Residues 361–378 (KDSPENTLHTNEDQKEAN) show a composition bias toward basic and acidic residues. The span at 406-415 (STITNITNDT) shows a compositional bias: low complexity. Residues 420-430 (EGSKAEEDAKN) show a composition bias toward basic and acidic residues. The span at 431-441 (SDVSNSQNSES) shows a compositional bias: polar residues. Basic and acidic residues predominate over residues 470–480 (EPPKENELKSS). Residues 1240–1357 (LISKEGYLMQ…WYSKLKKTVD (118 aa)) form the PH domain.

It belongs to the BUD4 family.

It localises to the bud neck. In terms of biological role, required for selection of future bud sites. Cooperates with other bud site selection proteins to recognize a spatial landmark during mitosis and they subsequently become a landmark for downstream polarity establishment factors that coordinate budding and cytokinesis. Involved in the septin organization at the bud neck. This is Bud site selection protein 4 (BUD4) from Vanderwaltozyma polyspora (strain ATCC 22028 / DSM 70294 / BCRC 21397 / CBS 2163 / NBRC 10782 / NRRL Y-8283 / UCD 57-17) (Kluyveromyces polysporus).